The sequence spans 754 residues: Glutathione biosynthesis bifunctional protein GshAB (754 aa).

Residues 1–333 (MHINQLLQHA…KAQKLNDKIA (333 aa)) are glutamate--cysteine ligase. Positions 489–752 (KKILRENGYP…LAKLFPEIST (264 aa)) constitute an ATP-grasp domain. Position 516–574 (516–574 (SQIKNKPIVVKPKTTNFGLGISIFETAASHNDYEKALDIAFIEDYSVLVEEFIPGTEYR)) interacts with ATP. The Mg(2+) site is built by D696, E717, and N719. The Mn(2+) site is built by D696, E717, and N719.

This sequence in the N-terminal section; belongs to the glutamate--cysteine ligase type 1 family. Type 2 subfamily. Monomer. The cofactor is Mg(2+). Mn(2+) serves as cofactor.

It carries out the reaction L-cysteine + L-glutamate + ATP = gamma-L-glutamyl-L-cysteine + ADP + phosphate + H(+). It catalyses the reaction gamma-L-glutamyl-L-cysteine + glycine + ATP = glutathione + ADP + phosphate + H(+). Its pathway is sulfur metabolism; glutathione biosynthesis; glutathione from L-cysteine and L-glutamate: step 1/2. The protein operates within sulfur metabolism; glutathione biosynthesis; glutathione from L-cysteine and L-glutamate: step 2/2. In terms of biological role, synthesizes glutathione from L-glutamate and L-cysteine via gamma-L-glutamyl-L-cysteine. The protein is Glutathione biosynthesis bifunctional protein GshAB of Streptococcus mutans serotype c (strain ATCC 700610 / UA159).